We begin with the raw amino-acid sequence, 138 residues long: Acidic phospholipase A2 PePLA2 (138 aa).

Residues 1 to 16 (MRTLWIMAVLLLGVEG) form the signal peptide. 7 disulfides stabilise this stretch: Cys-42–Cys-131, Cys-44–Cys-60, Cys-59–Cys-110, Cys-65–Cys-138, Cys-66–Cys-103, Cys-73–Cys-97, and Cys-91–Cys-101. Tyr-43, Gly-45, and Gly-47 together coordinate Ca(2+). His-63 is an active-site residue. A Ca(2+)-binding site is contributed by Asp-64. Asp-104 is a catalytic residue.

It belongs to the phospholipase A2 family. Group II subfamily. D49 sub-subfamily. Ca(2+) is required as a cofactor. In terms of tissue distribution, expressed by the venom gland.

The protein resides in the secreted. It catalyses the reaction a 1,2-diacyl-sn-glycero-3-phosphocholine + H2O = a 1-acyl-sn-glycero-3-phosphocholine + a fatty acid + H(+). Functionally, PLA2 catalyzes the calcium-dependent hydrolysis of the 2-acyl groups in 3-sn-phosphoglycerides. This Protobothrops elegans (Elegant pitviper) protein is Acidic phospholipase A2 PePLA2.